We begin with the raw amino-acid sequence, 257 residues long: 3-dehydroquinate dehydratase (257 aa).

3-dehydroquinate-binding positions include 50–52 (EWR) and Arg-86. The Proton donor/acceptor role is filled by His-147. Residue Lys-174 is the Schiff-base intermediate with substrate of the active site. The 3-dehydroquinate site is built by Arg-216, Ser-235, and Gln-239.

The protein belongs to the type-I 3-dehydroquinase family. Homodimer.

It catalyses the reaction 3-dehydroquinate = 3-dehydroshikimate + H2O. Its pathway is metabolic intermediate biosynthesis; chorismate biosynthesis; chorismate from D-erythrose 4-phosphate and phosphoenolpyruvate: step 3/7. Functionally, involved in the third step of the chorismate pathway, which leads to the biosynthesis of aromatic amino acids. Catalyzes the cis-dehydration of 3-dehydroquinate (DHQ) and introduces the first double bond of the aromatic ring to yield 3-dehydroshikimate. The sequence is that of 3-dehydroquinate dehydratase from Geobacillus kaustophilus (strain HTA426).